We begin with the raw amino-acid sequence, 30 residues long: Gamma-II crystallin (30 aa).

The Beta/gamma crystallin 'Greek key' domain occupies 1–30 (GKITFYEDRNFQGRCYECSTDCPDLSPYFS).

This sequence belongs to the beta/gamma-crystallin family. In terms of assembly, monomer.

Functionally, crystallins are the dominant structural components of the vertebrate eye lens. The chain is Gamma-II crystallin from Rhizoprionodon acutus (Milk shark).